Here is a 357-residue protein sequence, read N- to C-terminus: GTPase Obg (357 aa).

In terms of domain architecture, Obg spans 1-158; it reads MFVDNIKLKV…LEIVLELKLI (158 aa). Residues 159 to 345 enclose the OBG-type G domain; the sequence is ADVGLVGFPN…LKFALFDLVE (187 aa). GTP contacts are provided by residues 165–172, 190–194, 212–215, 280–283, and 326–328; these read GFPNAGKS, FTTLT, DIPG, TKCD, and SSV. Mg(2+) is bound by residues Ser-172 and Thr-192.

This sequence belongs to the TRAFAC class OBG-HflX-like GTPase superfamily. OBG GTPase family. In terms of assembly, monomer. Requires Mg(2+) as cofactor.

Its subcellular location is the cytoplasm. Its function is as follows. An essential GTPase which binds GTP, GDP and possibly (p)ppGpp with moderate affinity, with high nucleotide exchange rates and a fairly low GTP hydrolysis rate. Plays a role in control of the cell cycle, stress response, ribosome biogenesis and in those bacteria that undergo differentiation, in morphogenesis control. The chain is GTPase Obg from Nautilia profundicola (strain ATCC BAA-1463 / DSM 18972 / AmH).